Consider the following 263-residue polypeptide: Tryptophan synthase alpha chain (263 aa).

Catalysis depends on proton acceptor residues Glu49 and Asp60.

This sequence belongs to the TrpA family. As to quaternary structure, tetramer of two alpha and two beta chains.

The enzyme catalyses (1S,2R)-1-C-(indol-3-yl)glycerol 3-phosphate + L-serine = D-glyceraldehyde 3-phosphate + L-tryptophan + H2O. Its pathway is amino-acid biosynthesis; L-tryptophan biosynthesis; L-tryptophan from chorismate: step 5/5. The alpha subunit is responsible for the aldol cleavage of indoleglycerol phosphate to indole and glyceraldehyde 3-phosphate. The protein is Tryptophan synthase alpha chain of Roseobacter denitrificans (strain ATCC 33942 / OCh 114) (Erythrobacter sp. (strain OCh 114)).